The sequence spans 709 residues: Kelch-like protein 11 (709 aa).

Positions 1–15 (MAAAVAAAAAAAAAA) are cleaved as a signal peptide. One can recognise a BTB domain in the interval 95 to 171 (CDITLCFGGA…MYTGRIRVST (77 aa)). Residues 206 to 308 (CVAIHSLAHM…KPTYLTRHVK (103 aa)) form the BACK domain. Kelch repeat units lie at residues 361–408 (VIMV…ITES), 409–454 (YVYV…EVKG), 456–502 (LYSI…AIED), 504–557 (FVYI…VVNS), and 611–662 (DVFI…HVRI). The residue at position 466 (Ser-466) is a Phosphoserine.

As to quaternary structure, homodimer. Interacts with CUL3. Component of a cullin-RING-based BCR (BTB-CUL3-RBX1) E3 ubiquitin-protein ligase complex.

In terms of biological role, component of a cullin-RING-based BCR (BTB-CUL3-RBX1) E3 ubiquitin-protein ligase complex that mediates the ubiquitination of target proteins, leading most often to their proteasomal degradation. The chain is Kelch-like protein 11 (Klhl11) from Mus musculus (Mouse).